The primary structure comprises 136 residues: Protein PsiE homolog (136 aa).

The next 4 helical transmembrane spans lie at 15 to 35, 55 to 75, 82 to 102, and 108 to 128; these read ILQT…VVFL, YELV…ALIV, FHFP…RLII, and PLDV…LWLC.

It belongs to the PsiE family.

The protein localises to the cell inner membrane. In Enterobacter sp. (strain 638), this protein is Protein PsiE homolog.